Consider the following 146-residue polypeptide: Transcriptional regulator MraZ (146 aa).

SpoVT-AbrB domains follow at residues 5 to 52 (SAAL…PRAE) and 81 to 124 (AAEI…KEES).

It belongs to the MraZ family. In terms of assembly, forms oligomers.

It localises to the cytoplasm. It is found in the nucleoid. The polypeptide is Transcriptional regulator MraZ (Alcanivorax borkumensis (strain ATCC 700651 / DSM 11573 / NCIMB 13689 / SK2)).